Here is a 636-residue protein sequence, read N- to C-terminus: Fructose-1,6-bisphosphatase class 3 (636 aa).

Belongs to the FBPase class 3 family. It depends on Mn(2+) as a cofactor.

The enzyme catalyses beta-D-fructose 1,6-bisphosphate + H2O = beta-D-fructose 6-phosphate + phosphate. It participates in carbohydrate biosynthesis; gluconeogenesis. This Streptococcus sanguinis (strain SK36) protein is Fructose-1,6-bisphosphatase class 3.